We begin with the raw amino-acid sequence, 307 residues long: MPTTDYQQVLNDITQEVAPLLSQGKVADYIPALAEVDPEQFSIAIYTTSGETFCAGDCTQQFTIQSVSKVMTLTLALQRYGDELWHRVGKEPSGTAFNSLTQLEFEKGIPRNPFINAGAIVTCDALYSRLSAPMHTMLETFRALSGNRCIAIDKKVANSEYEFRHRNAAMGHLMKSFGNFENEVDDVLWAYFNFCAIELNCIELAKAYNFLANNGIDNTSGKRVLPSRQTKQLNSLLFTSGLYDAAGDFGYRVGMPGKSGVSGTVLAVLPNKFTVAVWSPGLNSFGNSVAGIAALELLSKKLDISIF.

Ser66, Asn116, Glu160, Asn167, Tyr191, Tyr243, and Val261 together coordinate substrate.

The protein belongs to the glutaminase family. Homotetramer.

The catalysed reaction is L-glutamine + H2O = L-glutamate + NH4(+). The chain is Glutaminase from Pseudoalteromonas translucida (strain TAC 125).